The primary structure comprises 344 residues: Biotin synthase (344 aa).

Residues 36-260 (NQIQISTLLS…MMPTSYIRLS (225 aa)) form the Radical SAM core domain. Positions 51, 55, and 58 each coordinate [4Fe-4S] cluster. Residues C95, C126, C186, and R258 each coordinate [2Fe-2S] cluster.

The protein belongs to the radical SAM superfamily. Biotin synthase family. Homodimer. The cofactor is [4Fe-4S] cluster. [2Fe-2S] cluster serves as cofactor.

The catalysed reaction is (4R,5S)-dethiobiotin + (sulfur carrier)-SH + 2 reduced [2Fe-2S]-[ferredoxin] + 2 S-adenosyl-L-methionine = (sulfur carrier)-H + biotin + 2 5'-deoxyadenosine + 2 L-methionine + 2 oxidized [2Fe-2S]-[ferredoxin]. The protein operates within cofactor biosynthesis; biotin biosynthesis; biotin from 7,8-diaminononanoate: step 2/2. Catalyzes the conversion of dethiobiotin (DTB) to biotin by the insertion of a sulfur atom into dethiobiotin via a radical-based mechanism. In Buchnera aphidicola subsp. Baizongia pistaciae (strain Bp), this protein is Biotin synthase.